We begin with the raw amino-acid sequence, 101 residues long: Antiviral protein CAP (101 aa).

Its function is as follows. Has antiviral activity against tobacco mosaic virus and antitumor activity. The chain is Antiviral protein CAP from Coprinus comatus (Shaggy mane).